A 68-amino-acid chain; its full sequence is MFTLKKSLLLLFFLGTINLSLCQEERNADEEERRDERNVEVEKRILPFVAGVAAEMMQHVYCAASKKC.

The signal sequence occupies residues 1-22 (MFTLKKSLLLLFFLGTINLSLC). Positions 23 to 42 (QEERNADEEERRDERNVEVE) are excised as a propeptide. A disulfide bond links cysteine 62 and cysteine 68.

In terms of tissue distribution, expressed by the skin glands.

Its subcellular location is the secreted. In terms of biological role, antimicrobial peptide. This chain is Lividin-1, found in Odorrana livida (Green mountain frog).